The primary structure comprises 437 residues: GTPase Der (437 aa).

EngA-type G domains follow at residues Ala-2–Gly-167 and Ile-180–Phe-356. GTP contacts are provided by residues Gly-8 to Ser-15, Asp-55 to Ile-59, Asn-118 to Glu-121, Gly-186 to Ser-193, Asp-233 to Leu-237, and Asn-299 to Asp-302. Positions Tyr-357–His-437 constitute a KH-like domain.

This sequence belongs to the TRAFAC class TrmE-Era-EngA-EngB-Septin-like GTPase superfamily. EngA (Der) GTPase family. As to quaternary structure, associates with the 50S ribosomal subunit.

In terms of biological role, GTPase that plays an essential role in the late steps of ribosome biogenesis. The sequence is that of GTPase Der from Thermosipho melanesiensis (strain DSM 12029 / CIP 104789 / BI429).